The following is a 624-amino-acid chain: Serine/threonine-protein kinase ppk35 (624 aa).

Positions 162 to 465 constitute a Protein kinase domain; that stretch reads FDLLVKLGQG…TIEIQKHPFF (304 aa). Residues 168–176 and Lys-191 each bind ATP; that span reads LGQGGYGSV. Residue Asp-285 is the Proton acceptor of the active site. Residues 466-548 form the AGC-kinase C-terminal domain; that stretch reads KRLHWNGLRK…KYRPNARKPL (83 aa). A compositionally biased stretch (basic residues) spans 545–559; it reads RKPLVGRHREKRQLR. The tract at residues 545-617 is disordered; the sequence is RKPLVGRHRE…VHRLLERKGK (73 aa). A compositionally biased stretch (basic and acidic residues) spans 560–574; it reads KEKPEKKNNSTKQKD. The span at 596–609 shows a compositional bias: basic residues; that stretch reads SKTKGHKTKSSRVH.

Belongs to the protein kinase superfamily. Ser/Thr protein kinase family.

The protein resides in the cytoplasm. It localises to the nucleus. It is found in the nucleolus. The enzyme catalyses L-seryl-[protein] + ATP = O-phospho-L-seryl-[protein] + ADP + H(+). The catalysed reaction is L-threonyl-[protein] + ATP = O-phospho-L-threonyl-[protein] + ADP + H(+). Functionally, has a role in meiosis. The polypeptide is Serine/threonine-protein kinase ppk35 (ppk35) (Schizosaccharomyces pombe (strain 972 / ATCC 24843) (Fission yeast)).